A 392-amino-acid polypeptide reads, in one-letter code: GTPase Obg (392 aa).

An Obg domain is found at 1-159 (MKFVDEATIL…RDLQLELMLL (159 aa)). Positions 127 to 148 (NSRFKSSVNRSPRQKTMGTPGD) are disordered. The span at 129–143 (RFKSSVNRSPRQKTM) shows a compositional bias: polar residues. The OBG-type G domain maps to 160-333 (ADVGMLGMPN…LCWDVMAFII (174 aa)). Residues 166 to 173 (GMPNAGKS), 191 to 195 (FTTLV), 213 to 216 (DIPG), 283 to 286 (NKID), and 314 to 316 (SAA) each bind GTP. S173 and T193 together coordinate Mg(2+). Residues 363–386 (EQEVEVEDDEEWDEDWDEDDEEGV) are compositionally biased toward acidic residues. Positions 363–392 (EQEVEVEDDEEWDEDWDEDDEEGVEFIYKR) are disordered.

Belongs to the TRAFAC class OBG-HflX-like GTPase superfamily. OBG GTPase family. As to quaternary structure, monomer. Mg(2+) is required as a cofactor.

It is found in the cytoplasm. In terms of biological role, an essential GTPase which binds GTP, GDP and possibly (p)ppGpp with moderate affinity, with high nucleotide exchange rates and a fairly low GTP hydrolysis rate. Plays a role in control of the cell cycle, stress response, ribosome biogenesis and in those bacteria that undergo differentiation, in morphogenesis control. In Enterobacter sp. (strain 638), this protein is GTPase Obg.